We begin with the raw amino-acid sequence, 200 residues long: 3-isopropylmalate dehydratase small subunit (200 aa).

It belongs to the LeuD family. LeuD type 1 subfamily. As to quaternary structure, heterodimer of LeuC and LeuD.

It catalyses the reaction (2R,3S)-3-isopropylmalate = (2S)-2-isopropylmalate. It functions in the pathway amino-acid biosynthesis; L-leucine biosynthesis; L-leucine from 3-methyl-2-oxobutanoate: step 2/4. Functionally, catalyzes the isomerization between 2-isopropylmalate and 3-isopropylmalate, via the formation of 2-isopropylmaleate. The chain is 3-isopropylmalate dehydratase small subunit from Campylobacter jejuni subsp. jejuni serotype O:23/36 (strain 81-176).